The primary structure comprises 190 residues: Elongation factor P-like protein (190 aa).

This sequence belongs to the elongation factor P family.

The protein is Elongation factor P-like protein of Klebsiella pneumoniae (strain 342).